A 275-amino-acid polypeptide reads, in one-letter code: Dermonecrotic toxin LruSicTox-alphaIV1 (275 aa).

Residue histidine 5 is part of the active site. Mg(2+) is bound by residues glutamate 25 and aspartate 27. Histidine 41 serves as the catalytic Nucleophile. Intrachain disulfides connect cysteine 45-cysteine 51 and cysteine 47-cysteine 192. Residue aspartate 85 participates in Mg(2+) binding.

Belongs to the arthropod phospholipase D family. Class II subfamily. The cofactor is Mg(2+). As to expression, expressed by the venom gland.

The protein localises to the secreted. The enzyme catalyses an N-(acyl)-sphingosylphosphocholine = an N-(acyl)-sphingosyl-1,3-cyclic phosphate + choline. It catalyses the reaction an N-(acyl)-sphingosylphosphoethanolamine = an N-(acyl)-sphingosyl-1,3-cyclic phosphate + ethanolamine. It carries out the reaction a 1-acyl-sn-glycero-3-phosphocholine = a 1-acyl-sn-glycero-2,3-cyclic phosphate + choline. The catalysed reaction is a 1-acyl-sn-glycero-3-phosphoethanolamine = a 1-acyl-sn-glycero-2,3-cyclic phosphate + ethanolamine. Dermonecrotic toxins cleave the phosphodiester linkage between the phosphate and headgroup of certain phospholipids (sphingolipid and lysolipid substrates), forming an alcohol (often choline) and a cyclic phosphate. This toxin acts on sphingomyelin (SM). It may also act on ceramide phosphoethanolamine (CPE), lysophosphatidylcholine (LPC) and lysophosphatidylethanolamine (LPE), but not on lysophosphatidylserine (LPS), and lysophosphatidylglycerol (LPG). It acts by transphosphatidylation, releasing exclusively cyclic phosphate products as second products. Induces dermonecrosis, hemolysis, increased vascular permeability, edema, inflammatory response, and platelet aggregation. This is Dermonecrotic toxin LruSicTox-alphaIV1 from Loxosceles rufescens (Mediterranean recluse spider).